The chain runs to 407 residues: tRNA (guanine(9)-N1)-methyltransferase (407 aa).

A compositionally biased stretch (basic and acidic residues) spans 1–19 (MDLDPAHKPSQAEETKEQG). Disordered regions lie at residues 1 to 105 (MDLD…VRKR) and 220 to 256 (ENMIEPLQRSLTEKSPWARDEKDPLPLPDPEPEPRPE). Positions 20 to 32 (NEQGQVEQNQAQQ) are enriched in low complexity. Residues 91-103 (LKRKDSRIARKVR) are compositionally biased toward basic residues. The region spanning 120–356 (ANKQKPPSVN…SVIPKRKGGK (237 aa)) is the SAM-dependent MTase TRM10-type domain. S-adenosyl-L-methionine contacts are provided by residues 263-264 (LS), Gly283, 287-291 (DKNRE), Cys295, Leu309, and 321-323 (TVL). Catalysis depends on Asp287, which acts as the Proton acceptor. Residues 353–407 (KGGKLKEQQGASGETQETEEAEAEDPEEENEETKDPDAEASASKQNTPKVEVTSK) form a disordered region. Residues 368–386 (QETEEAEAEDPEEENEETK) are compositionally biased toward acidic residues. Positions 394–407 (ASKQNTPKVEVTSK) are enriched in polar residues.

It belongs to the class IV-like SAM-binding methyltransferase superfamily. TRM10 family. In terms of assembly, monomer.

It localises to the cytoplasm. It is found in the nucleus. It carries out the reaction guanosine(9) in tRNA + S-adenosyl-L-methionine = N(1)-methylguanosine(9) in tRNA + S-adenosyl-L-homocysteine + H(+). In terms of biological role, S-adenosyl-L-methionine-dependent guanine N(1)-methyltransferase that catalyzes the formation of N(1)-methylguanine at position 9 (m1G9) in cytoplasmic tRNA. This Gibberella zeae (strain ATCC MYA-4620 / CBS 123657 / FGSC 9075 / NRRL 31084 / PH-1) (Wheat head blight fungus) protein is tRNA (guanine(9)-N1)-methyltransferase.